Reading from the N-terminus, the 834-residue chain is Sodium/hydrogen exchanger 3 (834 aa).

The signal sequence occupies residues 1 to 25; the sequence is MWGLGARGPDRGLLLALALGGLARA. The Extracellular portion of the chain corresponds to 26 to 51; the sequence is GGVEVEPGGAHGESGGFQVVTFEWAH. The chain crosses the membrane as a helical span at residues 52 to 74; that stretch reads VQDPYVIALWILVASLAKIGFHL. The Cytoplasmic segment spans residues 75–82; the sequence is SHKVTSVV. A helical transmembrane segment spans residues 83 to 102; that stretch reads PESALLIVLGLVLGGIVWAA. Topologically, residues 103 to 111 are extracellular; sequence DHIASFTLT. A helical membrane pass occupies residues 112–129; sequence PTVFFFYLLPPIVLDAGY. The Cytoplasmic portion of the chain corresponds to 130–132; sequence FMP. Residues 133 to 168 traverse the membrane as a helical segment; sequence NRLFFGNLGTILLYAVVGTVWNAATTGLSLYGVFLS. 3 residues coordinate a 1,2-diacyl-sn-glycero-3-phospho-(1D-myo-inositol): glycine 138, glycine 141, and threonine 142. Topologically, residues 169-181 are extracellular; the sequence is GLMGDLQIGLLDF. The helical transmembrane segment at 182 to 203 threads the bilayer; that stretch reads LLFGSLMAAVDPVAVLAVFEEV. The Cytoplasmic portion of the chain corresponds to 204-205; it reads HV. Residues 206 to 237 form a helical membrane-spanning segment; it reads NEVLFIIVFGESLLNDAVTVVLYNVFESFVAL. Residues 238–244 are Extracellular-facing; that stretch reads GGDNVTG. Asparagine 241 is a glycosylation site (N-linked (GlcNAc...) asparagine). Residues 245–279 traverse the membrane as a helical segment; the sequence is VDCVKGIVSFFVVSLGGTLVGVVFAFLLSLVTRFT. Residues 280 to 281 lie on the Cytoplasmic side of the membrane; it reads KH. Residues 282 to 304 traverse the membrane as a helical segment; sequence VRIIEPGFVFIISYLSYLTSEML. Residues 305–306 lie on the Extracellular side of the membrane; the sequence is SL. A helical membrane pass occupies residues 307–323; it reads SAILAITFCGICCQKYV. Over 324-330 the chain is Cytoplasmic; it reads KANISEQ. Residues 331–359 traverse the membrane as a helical segment; sequence SATTVRYTMKMLASSAETIIFMFLGISAV. Topologically, residues 360–367 are extracellular; it reads NPFIWTWN. Residues 368-389 form a helical membrane-spanning segment; it reads TAFVLLTLVFISVYRAIGVVLQ. Over 390 to 402 the chain is Cytoplasmic; sequence TWLLNRYRMVQLE. Methionine 398 lines the a 1,2-diacyl-sn-glycero-3-phospho-(1D-myo-inositol) pocket. Residues 403–426 form a helical membrane-spanning segment; sequence PIDQVVLSYGGLRGAVAFALVVLL. The Extracellular portion of the chain corresponds to 427 to 433; it reads DGDKVKE. The helical transmembrane segment at 434–467 threads the bilayer; the sequence is KNLFVSTTIIVVFFTVIFQGLTIKPLVQWLKVKR. Residues 468-834 lie on the Cytoplasmic side of the membrane; the sequence is SEHREPRLNE…PAALPESTHM (367 aa). A 1,2-diacyl-sn-glycero-3-phospho-(1D-myo-inositol) contacts are provided by glutamine 497, isoleucine 498, and histidine 500. 2 positions are modified to phosphoserine: serine 555 and serine 563. Residues 575–589 form an interaction with EZR region; it reads RSSTVEASVSYLLRE. The interval 590-667 is interaction with NHERF4; the sequence is NVSAVCLDMQ…RKRLESFKST (78 aa). Positions 591–695 are interaction with AHCYL1; that stretch reads VSAVCLDMQS…AQKRRNSSIP (105 aa). 2 positions are modified to phosphoserine: serine 592 and serine 607. The residue at position 663 (serine 663) is a Phosphoserine; by SGK1. Basic residues predominate over residues 679 to 691; that stretch reads KLYKRERAQKRRN. The interval 679 to 728 is disordered; that stretch reads KLYKRERAQKRRNSSIPNGKLPMESPAQNFTIKEKDLELSDTEEPPNYDE. Over residues 717–728 the composition is skewed to acidic residues; the sequence is LSDTEEPPNYDE. Phosphoserine occurs at positions 718, 810, and 813. A disordered region spans residues 814 to 834; it reads FLQADGPEERPPAALPESTHM.

It belongs to the monovalent cation:proton antiporter 1 (CPA1) transporter (TC 2.A.36) family. In terms of assembly, homodimer. Found in the forms of complex and dynamic macromolecular complexes. Binds NHERF1 and NHERF2. Interacts with CHP1; increases SLC9A3 trafficking and activity at the plasma membrane. Interacts with CHP2 and SHANK2. Interacts with PDZK1 (via C-terminal PDZ domain). Interacts with NHERF4 and interaction decrease in response to elevated calcium ion levels. Interacts with AHCYL1; the interaction is required for SLC9A3 activity. Interacts with SNX27 (via PDZ domains); directs SLC9A3 membrane insertion from early endosomes to the plasma membrane. Interacts with EZR; interaction targets SLC9A3 to the apical membrane. Post-translationally, phosphorylated by PKA, which inhibits activity. Phosphorylation at Ser-663 by SGK1 is associated with increased abundance at the cell membrane. Phosphorylation at Ser-718 by CSNK2A1 regulates SLC9A3 activity through the formation of multiple signaling complexes.

It localises to the apical cell membrane. The protein localises to the cell membrane. Its subcellular location is the recycling endosome membrane. The protein resides in the early endosome membrane. It carries out the reaction Na(+)(in) + H(+)(out) = Na(+)(out) + H(+)(in). With respect to regulation, seems to switch between active and inactive modes in response to various stimuli. Activated directly or indirectly by membrane phosphatidylinositol (PIs). Regulated by a variety of auxiliary proteins, which facilitate the maturation, cell surface expression and function of the transporter. Inhibited specifically by the drug tenapanor. Functionally, plasma membrane Na(+)/H(+) antiporter. Exchanges intracellular H(+) ions for extracellular Na(+) in 1:1 stoichiometry, playing a key role in salt and fluid absorption and pH homeostasis. Major apical Na(+)/H(+) exchanger in kidney and intestine playing an important role in renal and intestine Na(+) absorption and blood pressure regulation. The protein is Sodium/hydrogen exchanger 3 of Homo sapiens (Human).